The sequence spans 241 residues: MRPRGVVIRRDAGLFGYERALVRCGLGPVAGVDEAGRGACAGPLVVAAVVLGPDGRRRLSPRLADSKLLTEQVREGLFDEVLRAAADWSAVVIPAAEIDRTGVHVANITGMRRAVARLGHRPGYVLTDGFAVAGFGTESLAVVKGDRVAACIAAASIVAKVTRDRIMRALHTRYAEYDFAQHKGYVTAAHAAALARYGPCDEHRKSYVNVAAHAVPTREARSLRLEDRVLATSLHGVTETA.

Residues 27–227 (GPVAGVDEAG…REARSLRLED (201 aa)) enclose the RNase H type-2 domain. A divalent metal cation is bound by residues aspartate 33, glutamate 34, and aspartate 128.

It belongs to the RNase HII family. Mn(2+) serves as cofactor. It depends on Mg(2+) as a cofactor.

The protein resides in the cytoplasm. It carries out the reaction Endonucleolytic cleavage to 5'-phosphomonoester.. Its function is as follows. Endonuclease that specifically degrades the RNA of RNA-DNA hybrids. The protein is Ribonuclease HII of Frankia alni (strain DSM 45986 / CECT 9034 / ACN14a).